A 201-amino-acid polypeptide reads, in one-letter code: Recombination protein RecR (201 aa).

The C4-type zinc finger occupies 57-72 (CADCRTFTEQDVCNIC). Positions 81–176 (GQICVVESPA…EASRIAHGVP (96 aa)) constitute a Toprim domain.

Belongs to the RecR family.

In terms of biological role, may play a role in DNA repair. It seems to be involved in an RecBC-independent recombinational process of DNA repair. It may act with RecF and RecO. This Citrobacter koseri (strain ATCC BAA-895 / CDC 4225-83 / SGSC4696) protein is Recombination protein RecR.